We begin with the raw amino-acid sequence, 268 residues long: Helix-loop-helix protein 25 (268 aa).

Over residues Met1–Ser23 the composition is skewed to polar residues. The disordered stretch occupies residues Met1 to Arg29. The segment at Glu92–Arg105 is basic motif. Positions Glu92–Asn149 constitute a bHLH domain. Residues Lys106–Asn149 are helix-loop-helix motif.

Its subcellular location is the nucleus. Probable transcription factor. Modulates lifespan and also recovery from the developmentally arrested larval state known as dauer, perhaps acting upstream of phosphatase PTEN/daf-18. Regulates expression of genes involved in cell division, cell-cycle regulation, and sexual reproduction, including daf-18. This chain is Helix-loop-helix protein 25, found in Caenorhabditis elegans.